The chain runs to 89 residues: GTP cyclohydrolase 1 feedback regulatory protein (89 aa).

Belongs to the GFRP family. In terms of assembly, homopentamer. Forms a complex with GCH1 where a GCH1 homodecamer is sandwiched by two GFRP homopentamers.

The protein localises to the nucleus. Its subcellular location is the nucleus membrane. It localises to the cytoplasm. It is found in the cytosol. In terms of biological role, mediates tetrahydrobiopterin inhibition of GTP cyclohydrolase 1. This chain is GTP cyclohydrolase 1 feedback regulatory protein (gchfr), found in Danio rerio (Zebrafish).